The following is an 837-amino-acid chain: WW domain-containing protein tag-325 (837 aa).

Polar residues predominate over residues 1-11 (MTTAVQPSDTT). Positions 1-66 (MTTAVQPSDT…SNGQNYADDP (66 aa)) are disordered. Low complexity predominate over residues 33-43 (SESAESSSSSS). Over residues 44–61 (QTNVSAANTLPRESNGQN) the composition is skewed to polar residues. One can recognise a WW domain in the interval 96–129 (RDLLNGWFEYETDVGRTFFFNKETGKSQWIPPRF). Residues 150-161 (TCSFQGSSTSSS) show a composition bias toward low complexity. 5 disordered regions span residues 150 to 181 (TCSF…RKSQ), 194 to 257 (DDVD…STAS), 338 to 403 (TTSS…EPAE), 548 to 574 (MRRR…EPRP), and 778 to 800 (KNKK…TPVQ). Over residues 162-181 (EEQKENKMRESLADDDRKSQ) the composition is skewed to basic and acidic residues. Over residues 247-257 (PTSSRKASTAS) the composition is skewed to polar residues. The span at 371–403 (RCEERRGSGDGREPVRTIRCGDLERSENDEPAE) shows a compositional bias: basic and acidic residues. Residues 386-505 (RTIRCGDLER…WYKSLEEVVA (120 aa)) enclose the PH domain. A compositionally biased stretch (polar residues) spans 556–569 (SQSAIETVSTSVST). Residues 610 to 827 (STLSAICQHE…YLLESANKFD (218 aa)) form the Rho-GAP domain. Basic residues predominate over residues 778–788 (KNKKAGKKAKP).

This is WW domain-containing protein tag-325 (tag-325) from Caenorhabditis elegans.